Reading from the N-terminus, the 110-residue chain is Snake venom vascular endothelial growth factor toxin (110 aa).

A Pyrrolidone carboxylic acid modification is found at Gln1. Cystine bridges form between Cys14-Cys56, Cys45-Cys91, and Cys49-Cys93.

This sequence belongs to the PDGF/VEGF growth factor family. Snake venom VEGF subfamily. Homodimer; disulfide-linked. As to expression, expressed by the venom gland.

It is found in the secreted. Snake venom VEGFs that may contribute to venom dispersion and prey subjugation by inducing vascular permeability and hypotension. This protein potently stimulates dermal human microvascular endothelial cell (dHMVEC) proliferation in a VEGFR-2 dependent manner. This stimulatory effect is correlated with activation of the MAPK Erk1/2 signaling pathway. It also appears to be a chemoattractant for migration of these cells and stimulates their radial migration in a collagen gel. In vivo, it induces angiogenesis in a Japanese quail assay. This pro-angiogenic effect may also be related to its interaction with VEGFR-2. In addition, it may induce an increase in capillary permeability after intradermal injection, as well as a drastic hypotensive effect after intravenous injection. The hypotension is mediated by nitric oxide (NO), which is produced by VEGF-activated endothelium NO synthase. In Daboia palaestinae (Palestine viper), this protein is Snake venom vascular endothelial growth factor toxin.